The following is a 332-amino-acid chain: DNA-directed RNA polymerase subunit alpha (332 aa).

The interval Met1 to Glu232 is alpha N-terminal domain (alpha-NTD). The interval Ile246–Ala332 is alpha C-terminal domain (alpha-CTD).

Belongs to the RNA polymerase alpha chain family. As to quaternary structure, homodimer. The RNAP catalytic core consists of 2 alpha, 1 beta, 1 beta' and 1 omega subunit. When a sigma factor is associated with the core the holoenzyme is formed, which can initiate transcription.

It carries out the reaction RNA(n) + a ribonucleoside 5'-triphosphate = RNA(n+1) + diphosphate. Functionally, DNA-dependent RNA polymerase catalyzes the transcription of DNA into RNA using the four ribonucleoside triphosphates as substrates. The sequence is that of DNA-directed RNA polymerase subunit alpha from Nitrosococcus oceani (strain ATCC 19707 / BCRC 17464 / JCM 30415 / NCIMB 11848 / C-107).